Consider the following 428-residue polypeptide: Protein CLP1 homolog (428 aa).

ATP is bound by residues glutamate 22, lysine 63, and 127-132 (DVGKST).

It belongs to the Clp1 family. Clp1 subfamily.

The protein resides in the nucleus. Its function is as follows. Required for endonucleolytic cleavage during polyadenylation-dependent pre-mRNA 3'-end formation. In Nematostella vectensis (Starlet sea anemone), this protein is Protein CLP1 homolog.